Here is a 390-residue protein sequence, read N- to C-terminus: Methylthioribose-1-phosphate isomerase (390 aa).

The active-site Proton donor is Asp258.

The protein belongs to the eIF-2B alpha/beta/delta subunits family. MtnA subfamily.

It localises to the cytoplasm. Its subcellular location is the nucleus. It carries out the reaction 5-(methylsulfanyl)-alpha-D-ribose 1-phosphate = 5-(methylsulfanyl)-D-ribulose 1-phosphate. Its pathway is amino-acid biosynthesis; L-methionine biosynthesis via salvage pathway; L-methionine from S-methyl-5-thio-alpha-D-ribose 1-phosphate: step 1/6. Functionally, catalyzes the interconversion of methylthioribose-1-phosphate (MTR-1-P) into methylthioribulose-1-phosphate (MTRu-1-P). This Coccidioides posadasii (strain C735) (Valley fever fungus) protein is Methylthioribose-1-phosphate isomerase.